A 131-amino-acid chain; its full sequence is Type IV wide pilus major component PilA4 (131 aa).

Residues M1–G6 constitute a propeptide, leader sequence. An N-methylphenylalanine modification is found at F7. A helical transmembrane segment spans residues F7–I27. Residues C95 and C130 are joined by a disulfide bond.

Interacts with PilQ. Found in three forms of 14-kDa, 18-kDa and a glycosylated 23-kDa form. Both narrow and wide pili are glycosylated.

The protein localises to the cell inner membrane. It is found in the cell outer membrane. It localises to the periplasm. Its function is as follows. Plays an essential role in the assembly of two types of T4P pili: a wide and a narrow that participate in natural transformation and twitching motility. Major component of the wide pilus that is essential for natural transformation working as a DNA translocator structure that spans the inner and outer membranes. In addition, participates in the assembly of the narrow pilus composed of the PilA5 subunit that is required for twitching motility. The polypeptide is Type IV wide pilus major component PilA4 (pilA4) (Thermus thermophilus (strain ATCC BAA-163 / DSM 7039 / HB27)).